Consider the following 305-residue polypeptide: Hepatitis A virus cellular receptor 1 homolog (305 aa).

An N-terminal signal peptide occupies residues 1–21 (MNQIQVFISGLILLLPGAVDS). Positions 22–122 (YVEVKGVVGH…PGWFNDQKVT (101 aa)) constitute an Ig-like V-type domain. Residues 22 to 237 (YVEVKGVVGH…GKPQKNPTKG (216 aa)) are Extracellular-facing. Disulfide bonds link C37-C108, C49-C60, and C55-C107. The interval 129 to 185 (PEIPTRPPTRPTTTRPTATGRPTTISTRSTHVPTSIRVSTSTPPTSTHTWTHKPEPT) is disordered. Low complexity-rich tracts occupy residues 139–152 (PTTT…RPTT) and 161–177 (PTSI…STHT). N208 carries an N-linked (GlcNAc...) asparagine glycan. Residues 238–258 (FYVGICIAALLLLLLVSTVAI) traverse the membrane as a helical segment. Over 259-305 (TRYILMKRKSASLSVVAFRVSKIEALQNAAVVHSRAEDNIYIVEDRP) the chain is Cytoplasmic.

It belongs to the immunoglobulin superfamily. TIM family. In terms of assembly, interacts with STAM. Interacts with SELPLG. In terms of tissue distribution, expressed by stimulated T-cells. Expressed during primary antigen stimulation. Expressed at higher levels on B rather than T-cells, both constitutively and after activation.

It localises to the cell membrane. Functionally, phosphatidylserine receptor that plays an important functional role in regulatory B-cells homeostasis including generation, expansion and suppressor functions. As P-selectin/SELPLG ligand, plays a specialized role in activated but not naive T-cell trafficking during inflammatory responses. Controls thereby T-cell accumulation in the inflamed central nervous system (CNS) and the induction of autoimmune disease. Also regulates expression of various anti-inflammatory cytokines and co-inhibitory ligands including IL10. Acts as a regulator of T-cell proliferation. May play a role in kidney injury and repair. This is Hepatitis A virus cellular receptor 1 homolog (Havcr1) from Mus musculus (Mouse).